Reading from the N-terminus, the 231-residue chain is 5'-methylthioadenosine/S-adenosylhomocysteine nucleosidase (231 aa).

E13 serves as the catalytic Proton acceptor. Substrate is bound by residues G79, M153, and 174–175; that span reads ME. D198 acts as the Proton donor in catalysis.

The protein belongs to the PNP/UDP phosphorylase family. MtnN subfamily.

It catalyses the reaction S-adenosyl-L-homocysteine + H2O = S-(5-deoxy-D-ribos-5-yl)-L-homocysteine + adenine. It carries out the reaction S-methyl-5'-thioadenosine + H2O = 5-(methylsulfanyl)-D-ribose + adenine. The catalysed reaction is 5'-deoxyadenosine + H2O = 5-deoxy-D-ribose + adenine. It functions in the pathway amino-acid biosynthesis; L-methionine biosynthesis via salvage pathway; S-methyl-5-thio-alpha-D-ribose 1-phosphate from S-methyl-5'-thioadenosine (hydrolase route): step 1/2. In terms of biological role, catalyzes the irreversible cleavage of the glycosidic bond in both 5'-methylthioadenosine (MTA) and S-adenosylhomocysteine (SAH/AdoHcy) to adenine and the corresponding thioribose, 5'-methylthioribose and S-ribosylhomocysteine, respectively. Also cleaves 5'-deoxyadenosine, a toxic by-product of radical S-adenosylmethionine (SAM) enzymes, into 5-deoxyribose and adenine. In Halalkalibacterium halodurans (strain ATCC BAA-125 / DSM 18197 / FERM 7344 / JCM 9153 / C-125) (Bacillus halodurans), this protein is 5'-methylthioadenosine/S-adenosylhomocysteine nucleosidase.